The sequence spans 366 residues: Nucleoporin SEH1 (366 aa).

WD repeat units follow at residues 18–57 (AHRD…NWRR), 63–104 (CHGG…TEKD), 111–152 (QWIR…RIYE), 161–209 (RWNL…VIYE), 226–267 (DMPC…TAIL), and 290–329 (GDQR…QWVK).

The protein belongs to the WD repeat SEC13 family. Component of the nuclear pore complex (NPC). Probably part of the GATOR complex.

It localises to the nucleus. Its subcellular location is the nuclear pore complex. The protein resides in the lysosome membrane. Functionally, probable component of the nuclear pore complex (NPC) which is involved in the trafficking of macromolecules between the cytoplasm and nucleus. In terms of biological role, as a component of the GATOR complex may function in the amino acid-sensing branch of the TORC1 signaling pathway. In Caenorhabditis briggsae, this protein is Nucleoporin SEH1.